The primary structure comprises 531 residues: Na(+)/H(+) antiporter NhaB (531 aa).

Helical transmembrane passes span 23–45 (IAIL…VAGW), 66–86 (PGGL…SQVL), 97–117 (LLLI…LFVF), 130–164 (VSLM…FYSI), 206–226 (LLMH…VGEP), 244–264 (LRMG…CFLV), 307–327 (AFVG…VGLI), 352–372 (EEAL…GVII), 393–413 (LVIF…VFVG), 451–471 (ATPN…APLI), and 478–498 (MVWM…LAIE).

This sequence belongs to the NhaB Na(+)/H(+) (TC 2.A.34) antiporter family.

It is found in the cell inner membrane. It carries out the reaction 2 Na(+)(in) + 3 H(+)(out) = 2 Na(+)(out) + 3 H(+)(in). In terms of biological role, na(+)/H(+) antiporter that extrudes sodium in exchange for external protons. This Shewanella loihica (strain ATCC BAA-1088 / PV-4) protein is Na(+)/H(+) antiporter NhaB.